Reading from the N-terminus, the 390-residue chain is cAMP-dependent protein kinase regulatory subunit (390 aa).

The segment covering 1-17 (MSASGFTSPFGANSNPF) has biased composition (polar residues). Residues 1 to 81 (MSASGFTSPF…RPQNPDGYPA (81 aa)) form a disordered region. The tract at residues 1-129 (MSASGFTSPF…RLKKAIQGNF (129 aa)) is dimerization and phosphorylation. Ser-90 is subject to Phosphoserine. 3',5'-cyclic AMP is bound by residues 130–261 (LFSH…EEVP), Glu-208, Arg-217, 262–383 (ILST…GVEE), Glu-329, and Arg-338.

This sequence belongs to the cAMP-dependent kinase regulatory chain family. As to quaternary structure, tetramer, composed of 2 regulatory (R) and 2 catalytic (C) subunits. In the presence of cAMP it dissociates into 2 active monomeric C subunits and an R dimer.

The polypeptide is cAMP-dependent protein kinase regulatory subunit (SUM1) (Pyricularia oryzae (strain 70-15 / ATCC MYA-4617 / FGSC 8958) (Rice blast fungus)).